The following is an 89-amino-acid chain: uncharacterized protein (89 aa).

The chain crosses the membrane as a helical span at residues 67 to 86 (VYLSSMYICFILLAIWMTVW).

Its subcellular location is the membrane. This is an uncharacterized protein from Bacillus subtilis (strain 168).